Reading from the N-terminus, the 535-residue chain is Probable cytochrome P450 12b2, mitochondrial (535 aa).

A heme-binding site is contributed by C479.

It belongs to the cytochrome P450 family. Requires heme as cofactor.

It localises to the mitochondrion membrane. The sequence is that of Probable cytochrome P450 12b2, mitochondrial (Cyp12b2) from Drosophila melanogaster (Fruit fly).